Reading from the N-terminus, the 193-residue chain is Outer-membrane lipoprotein LolB (193 aa).

Positions 1–21 are cleaved as a signal peptide; it reads MRPARRFLAALACVAGALLSA. Cys22 carries the N-palmitoyl cysteine lipid modification. The S-diacylglycerol cysteine moiety is linked to residue Cys22.

It belongs to the LolB family. As to quaternary structure, monomer.

It localises to the cell outer membrane. In terms of biological role, plays a critical role in the incorporation of lipoproteins in the outer membrane after they are released by the LolA protein. This Azoarcus sp. (strain BH72) protein is Outer-membrane lipoprotein LolB.